A 123-amino-acid chain; its full sequence is Small ribosomal subunit protein uS12 (123 aa).

Aspartate 89 is modified (3-methylthioaspartic acid).

Belongs to the universal ribosomal protein uS12 family. As to quaternary structure, part of the 30S ribosomal subunit. Contacts proteins S8 and S17. May interact with IF1 in the 30S initiation complex.

Functionally, with S4 and S5 plays an important role in translational accuracy. In terms of biological role, interacts with and stabilizes bases of the 16S rRNA that are involved in tRNA selection in the A site and with the mRNA backbone. Located at the interface of the 30S and 50S subunits, it traverses the body of the 30S subunit contacting proteins on the other side and probably holding the rRNA structure together. The combined cluster of proteins S8, S12 and S17 appears to hold together the shoulder and platform of the 30S subunit. The sequence is that of Small ribosomal subunit protein uS12 from Rhizobium leguminosarum bv. trifolii (strain WSM2304).